Reading from the N-terminus, the 283-residue chain is Para-Rep C10 (283 aa).

Residues S3–W96 form the CRESS-DNA virus Rep endonuclease domain. Positions C10–L13 match the RCR-1 motif. A divalent metal cation-binding residues include E36 and H42. Residues H42–Q44 carry the RCR-2 motif. A Nuclear localization signal motif is present at residues K51–R71. The active-site For DNA cleavage activity is Y79. Residues Y79–K82 carry the RCR-3 motif. E84 serves as a coordination point for a divalent metal cation. Residues W96–H102 carry the Nuclear localization signal motif. G172–S180 lines the ATP pocket.

Belongs to the nanoviridea/circoviridae replication-associated protein family. Homooligomer (Potential). Rep binds to repeated DNA motifs (iterons). Mg(2+) is required as a cofactor. Mn(2+) serves as cofactor.

Its subcellular location is the host nucleus. The enzyme catalyses ATP + H2O = ADP + phosphate + H(+). Initiates and terminates the replication only of its own subviral DNA molecule. The closed circular ssDNA genome is first converted to a superhelical dsDNA. Rep binds a specific hairpin at the genome origin of replication. Introduces an endonucleolytic nick within the intergenic region of the genome, thereby initiating the rolling circle replication (RCR). Following cleavage, binds covalently to the 5'-phosphate of DNA as a tyrosyl ester. The cleavage gives rise to a free 3'-OH that serves as a primer for the cellular DNA polymerase. The polymerase synthesizes the (+) strand DNA by rolling circle mechanism. After one round of replication, a Rep-catalyzed nucleotidyl transfer reaction releases a circular single-stranded virus genome, thereby terminating the replication. Displays origin-specific DNA cleavage, nucleotidyl transferase, ATPase and helicase activities. The chain is Para-Rep C10 (C10) from Milk vetch dwarf C10 alphasatellite (MVDC10A).